Reading from the N-terminus, the 253-residue chain is Tryptophan synthase alpha chain (253 aa).

Residues glutamate 45 and aspartate 56 each act as proton acceptor in the active site.

Belongs to the TrpA family. In terms of assembly, tetramer of two alpha and two beta chains.

It carries out the reaction (1S,2R)-1-C-(indol-3-yl)glycerol 3-phosphate + L-serine = D-glyceraldehyde 3-phosphate + L-tryptophan + H2O. Its pathway is amino-acid biosynthesis; L-tryptophan biosynthesis; L-tryptophan from chorismate: step 5/5. In terms of biological role, the alpha subunit is responsible for the aldol cleavage of indoleglycerol phosphate to indole and glyceraldehyde 3-phosphate. This chain is Tryptophan synthase alpha chain, found in Flavobacterium psychrophilum (strain ATCC 49511 / DSM 21280 / CIP 103535 / JIP02/86).